Consider the following 242-residue polypeptide: Ubiquitin-conjugating enzyme E2 6 (242 aa).

At 1-217 the chain is on the cytoplasmic side; that stretch reads MASRQAYKRL…QPAGNGTTSN (217 aa). The UBC core domain occupies 5 to 163; it reads QAYKRLSKEY…FPELAEQNRR (159 aa). Residue C87 is the Glycyl thioester intermediate of the active site. The chain crosses the membrane as a helical span at residues 218–240; the sequence is SIGRSLLFVLFSLAALLVAVCYT.

This sequence belongs to the ubiquitin-conjugating enzyme family.

The protein resides in the endoplasmic reticulum membrane. The catalysed reaction is S-ubiquitinyl-[E1 ubiquitin-activating enzyme]-L-cysteine + [E2 ubiquitin-conjugating enzyme]-L-cysteine = [E1 ubiquitin-activating enzyme]-L-cysteine + S-ubiquitinyl-[E2 ubiquitin-conjugating enzyme]-L-cysteine.. It participates in protein modification; protein ubiquitination. Functionally, catalyzes the covalent attachment of ubiquitin to other proteins. Functions in degradation of misfolded or regulated proteins localized in the endoplasmic reticulum (ER) lumen or membrane via the ubiquitin-proteasome system. Cognate E2 conjugating enzyme for the DOA10 ubiquitin ligase complex, which is part of the ERAD-C pathway responsible for the rapid degradation of membrane proteins with misfolded cytoplasmic domains. The protein is Ubiquitin-conjugating enzyme E2 6 (UBC6) of Eremothecium gossypii (strain ATCC 10895 / CBS 109.51 / FGSC 9923 / NRRL Y-1056) (Yeast).